The following is a 709-amino-acid chain: DCC-interacting protein 13-alpha (709 aa).

A required for RAB5A binding region spans residues 1 to 428; that stretch reads MPGIDKLPIE…RPPTARTSSS (428 aa). One can recognise a BAR domain in the interval 3–268; sequence GIDKLPIEET…DPLYVPDPDP (266 aa). The stretch at 215–259 forms a coiled coil; the sequence is SENLNEQLEEFLANIGTSVQNVRREMDSDIETMQQTIEDLEVASD. A PH domain is found at 277 to 375; sequence LTRKAGYLNA…WICTINNISK (99 aa). 3 disordered regions span residues 397-434, 467-491, and 645-709; these read AVTPSPSFQQRHESLRPAAGQSRPPTARTSSSGSLGSE, GQAKAFGQGGRRTNPFGESGGSTKS, and VKEK…ESEA. Phosphothreonine is present on Thr399. A Phosphoserine modification is found at Ser401. Positions 403–414 match the F&amp;H motif; that stretch reads SFQQRHESLRPA. The residue at position 410 (Ser410) is a Phosphoserine; by PKA. A PID domain is found at 496 to 656; that stretch reads SILHQLFIVR…EKQQKELNKQ (161 aa). Positions 621–673 form a coiled coil; that stretch reads LAKQIALHAELDRRASEKQKEIERVKEKQQKELNKQKQIEKDLEEQSRLIAAS. A compositionally biased stretch (basic and acidic residues) spans 645–667; it reads VKEKQQKELNKQKQIEKDLEEQS. Residues 674-693 are compositionally biased toward polar residues; it reads SRPNQASSEGQFVVLSSSQS. 2 positions are modified to phosphoserine: Ser693 and Ser696. Residues 700–709 are compositionally biased toward basic and acidic residues; it reads EGGKKRESEA.

As to quaternary structure, homodimer. Binds RAB5A/Rab5 through an N-terminal domain. This interaction is essential for its recruitment to endosomal membranes as well as its role in cell proliferation. Binds DCC and the catalytic domain of the inactive form of AKT2 through its PID domain. Binds PIK3CA and subunits of the NuRD/MeCP1 complex. Interacts with OCRL and INPP5B. Interacts with NTRK2. Interacts with APPL2; interaction is independent of follicle stimulating hormone stimulation; interaction is decreased by adiponectin in a time-dependent manner. Forms a complex with APPL2 and RUVBL2. Forms a complex comprising APPL2, RUVBL2, CTNNB1, HDAC1 and HDAC2; interaction reduces interaction between CTNNB1, HDAC1, HDAC2 and RUVBL2 leading to the decrease of deacetylase activity of this complex; affects the recruitment of repressive complexes to the Wnt target genes. Interacts with ANXA2. Interacts with TGFBR1; interaction is TGF beta dependent; mediates trafficking of the TGFBR1 from the endosomes to the nucleus via microtubules in a TRAF6-dependent manner. Interacts with PRKCZ. Interacts with PIK3R1 and APPL2. Interacts with ADIPOR1; ADIPOQ enhances this interaction; inhibites adiponectin-stimulated binding of APPL2 to ADIPOR1. In terms of processing, phosphorylation at Ser-410 by PKA severely impairs binding to OCRL. In terms of tissue distribution, high levels in heart, ovary, pancreas and skeletal muscle.

Its subcellular location is the early endosome membrane. It is found in the nucleus. The protein resides in the cytoplasm. The protein localises to the endosome. It localises to the cell projection. Its subcellular location is the ruffle. It is found in the cytoplasmic vesicle. The protein resides in the phagosome. In terms of biological role, multifunctional adapter protein that binds to various membrane receptors, nuclear factors and signaling proteins to regulate many processes, such as cell proliferation, immune response, endosomal trafficking and cell metabolism. Regulates signaling pathway leading to cell proliferation through interaction with RAB5A and subunits of the NuRD/MeCP1 complex. Functions as a positive regulator of innate immune response via activation of AKT1 signaling pathway by forming a complex with APPL1 and PIK3R1. Inhibits Fc-gamma receptor-mediated phagocytosis through PI3K/Akt signaling in macrophages. Regulates TLR4 signaling in activated macrophages. Involved in trafficking of the TGFBR1 from the endosomes to the nucleus via microtubules in a TRAF6-dependent manner. Plays a role in cell metabolism by regulating adiponecting and insulin signaling pathways. Required for fibroblast migration through HGF cell signaling. Positive regulator of beta-catenin/TCF-dependent transcription through direct interaction with RUVBL2/reptin resulting in the relief of RUVBL2-mediated repression of beta-catenin/TCF target genes by modulating the interactions within the beta-catenin-reptin-HDAC complex. In Homo sapiens (Human), this protein is DCC-interacting protein 13-alpha.